Consider the following 304-residue polypeptide: MKLRHLEIFYTVMTCGSLSRAAESLNISQPAASKSLKNAELKLGFKLFQRVRGKLLPSREALELFEKAQGIYQDLSNLRLLADNLARDPRAKFTLGCLPCLGLSLVPEIATDFYQQNSNLVMTLTAEHTETLVKKLDLREIDLALTMQPVQQGDIMATLIAEVPLVYVDKDYRQGAVEIDSIDQQRWISPGLDSLSTAIAAHRVFPATGLNVETCYMAMEFVKRGVGCCITDIFSARHSLTPEMIHQISPPMKIDLYLLRRADASLSPVTQKFVDFLCKRLRNELREINLELYPGNKKSIVSPV.

Positions 1–58 (MKLRHLEIFYTVMTCGSLSRAAESLNISQPAASKSLKNAELKLGFKLFQRVRGKLLPS) constitute an HTH lysR-type domain. A DNA-binding region (H-T-H motif) is located at residues 18–37 (LSRAAESLNISQPAASKSLK).

The protein belongs to the LysR transcriptional regulatory family.

The protein localises to the cytoplasm. AdmX-mediated transcription is inhibited by indole-3-acetic and indole-3-pyruvic acids. AdmX recognizes and binds the auxin indole-3-acetic acid (IAA), which causes conformational changes in AdmX that result in the inhibition of the expression of the andrimid gene cluster and the suppression of antibiotic production. It also recognizes indole-3-pyruvic acid (IPA), an intermediate of the main IAA biosynthetic pathway in plants and plant beneficial bacteria, which also prevents andrimid synthesis, but to a much lesser extent. Positively regulates the biosynthesis of andrimid, a broad-spectrum antibiotic, by activating the expression of the adm biosynthetic gene cluster. It specifically binds to a region within the adm promoter. In Serratia plymuthica, this protein is HTH-type transcriptional regulator AdmX.